The chain runs to 301 residues: Ribonuclease HIII (301 aa).

The 218-residue stretch at 84–301 folds into the RNase H type-2 domain; that stretch reads ASAIGSDEVG…TEKAARIAKK (218 aa). Residues D90, E91, and D195 each coordinate a divalent metal cation.

This sequence belongs to the RNase HII family. RnhC subfamily. Mn(2+) serves as cofactor. The cofactor is Mg(2+).

It localises to the cytoplasm. It carries out the reaction Endonucleolytic cleavage to 5'-phosphomonoester.. Functionally, endonuclease that specifically degrades the RNA of RNA-DNA hybrids. The sequence is that of Ribonuclease HIII from Geobacillus sp. (strain WCH70).